We begin with the raw amino-acid sequence, 90 residues long: Exodeoxyribonuclease 7 small subunit (90 aa).

The disordered stretch occupies residues 62–90; the sequence is QDGQANPMSSQGHTAGEYPDDEAEEAEEA. The span at 64–74 shows a compositional bias: polar residues; that stretch reads GQANPMSSQGH. A compositionally biased stretch (acidic residues) spans 79–90; the sequence is YPDDEAEEAEEA.

It belongs to the XseB family. Heterooligomer composed of large and small subunits.

The protein resides in the cytoplasm. The catalysed reaction is Exonucleolytic cleavage in either 5'- to 3'- or 3'- to 5'-direction to yield nucleoside 5'-phosphates.. Bidirectionally degrades single-stranded DNA into large acid-insoluble oligonucleotides, which are then degraded further into small acid-soluble oligonucleotides. This Desulfovibrio desulfuricans (strain ATCC 27774 / DSM 6949 / MB) protein is Exodeoxyribonuclease 7 small subunit.